Reading from the N-terminus, the 207-residue chain is Ribosomal RNA small subunit methyltransferase G (207 aa).

Residues Gly-75, Met-80, 126–127 (VE), and Arg-141 contribute to the S-adenosyl-L-methionine site.

This sequence belongs to the methyltransferase superfamily. RNA methyltransferase RsmG family.

The protein localises to the cytoplasm. The enzyme catalyses guanosine(527) in 16S rRNA + S-adenosyl-L-methionine = N(7)-methylguanosine(527) in 16S rRNA + S-adenosyl-L-homocysteine. Specifically methylates the N7 position of guanine in position 527 of 16S rRNA. The protein is Ribosomal RNA small subunit methyltransferase G of Laribacter hongkongensis (strain HLHK9).